A 471-amino-acid chain; its full sequence is ATP synthase subunit beta 1 (471 aa).

157 to 164 (GGAGVGKT) contacts ATP.

It belongs to the ATPase alpha/beta chains family. As to quaternary structure, F-type ATPases have 2 components, CF(1) - the catalytic core - and CF(0) - the membrane proton channel. CF(1) has five subunits: alpha(3), beta(3), gamma(1), delta(1), epsilon(1). CF(0) has three main subunits: a(1), b(2) and c(9-12). The alpha and beta chains form an alternating ring which encloses part of the gamma chain. CF(1) is attached to CF(0) by a central stalk formed by the gamma and epsilon chains, while a peripheral stalk is formed by the delta and b chains.

The protein localises to the cell inner membrane. It carries out the reaction ATP + H2O + 4 H(+)(in) = ADP + phosphate + 5 H(+)(out). Its function is as follows. Produces ATP from ADP in the presence of a proton gradient across the membrane. The catalytic sites are hosted primarily by the beta subunits. The chain is ATP synthase subunit beta 1 from Pelobacter propionicus (strain DSM 2379 / NBRC 103807 / OttBd1).